The chain runs to 121 residues: Natriuretic peptides B (121 aa).

The N-terminal stretch at Met1 to Ser26 is a signal peptide. An intrachain disulfide couples Cys99 to Cys115.

This sequence belongs to the natriuretic peptide family. In terms of processing, the precursor molecule is proteolytically cleaved by the endoprotease Furin to produce brain natriuretic peptide 45. May undergo further proteolytic cleavage by various proteases such as DPP4, MME and possibly FAP, to give rise to a variety of shorter peptides. May be cleaved at Ser-91 by the prolyl endopeptidase FAP (seprase) activity (in vitro). May be degraded by IDE. During IDE degradation, the resulting products initially increase the activation of NPR1 and can also stimulate NPR2 to produce cGMP before the fragments are completely degraded and inactivated by IDE (in vitro). As to expression, expressed in the atria and ventricles, but at much lower levels than NPPA. Expression levels in the ventricles are slightly higher than in the atria. Very low levels of expression detected in the brain, hypothalamus, lung and aorta. Atria (at protein level). Cardiocytes (at protein level).

The protein resides in the secreted. In terms of biological role, cardiac hormone that plays a key role in mediating cardio-renal homeostasis. May also function as a paracrine antifibrotic factor in the heart. Acts by specifically binding and stimulating NPR1 to produce cGMP, which in turn activates effector proteins that drive various biological responses. Likely involved in regulating the extracellular fluid volume and maintaining the fluid-electrolyte balance through natriuresis, diuresis, kaluresis and chloruresis. The chain is Natriuretic peptides B (Nppb) from Rattus norvegicus (Rat).